A 335-amino-acid chain; its full sequence is Fructose-1,6-bisphosphatase class 1 (335 aa).

4 residues coordinate Mg(2+): glutamate 92, aspartate 114, leucine 116, and aspartate 117. Substrate contacts are provided by residues 117–120, asparagine 209, and lysine 275; that span reads DGSS. Glutamate 281 contributes to the Mg(2+) binding site.

The protein belongs to the FBPase class 1 family. Homotetramer. The cofactor is Mg(2+).

The protein resides in the cytoplasm. The catalysed reaction is beta-D-fructose 1,6-bisphosphate + H2O = beta-D-fructose 6-phosphate + phosphate. Its pathway is carbohydrate biosynthesis; gluconeogenesis. The chain is Fructose-1,6-bisphosphatase class 1 from Verminephrobacter eiseniae (strain EF01-2).